The chain runs to 122 residues: Large ribosomal subunit protein uL14 (122 aa).

The protein belongs to the universal ribosomal protein uL14 family. In terms of assembly, part of the 50S ribosomal subunit. Forms a cluster with proteins L3 and L19. In the 70S ribosome, L14 and L19 interact and together make contacts with the 16S rRNA in bridges B5 and B8.

Its function is as follows. Binds to 23S rRNA. Forms part of two intersubunit bridges in the 70S ribosome. This is Large ribosomal subunit protein uL14 from Granulibacter bethesdensis (strain ATCC BAA-1260 / CGDNIH1).